The sequence spans 106 residues: Large ribosomal subunit protein uL24 (106 aa).

This sequence belongs to the universal ribosomal protein uL24 family. Part of the 50S ribosomal subunit.

One of two assembly initiator proteins, it binds directly to the 5'-end of the 23S rRNA, where it nucleates assembly of the 50S subunit. Functionally, one of the proteins that surrounds the polypeptide exit tunnel on the outside of the subunit. This Polaromonas sp. (strain JS666 / ATCC BAA-500) protein is Large ribosomal subunit protein uL24.